The following is a 278-amino-acid chain: Serine/threonine-protein phosphatase PGAM5, mitochondrial (278 aa).

Residues 7–27 traverse the membrane as a helical segment; the sequence is LIAGGSAAAAAAAILGAAAVG.

Belongs to the phosphoglycerate mutase family. BPG-dependent PGAM subfamily. In terms of processing, phosphorylated by the RIPK1/RIPK3 complex under necrotic conditions. This phosphorylation increases PGAM5 phosphatase activity.

Its subcellular location is the mitochondrion outer membrane. It carries out the reaction O-phospho-L-seryl-[protein] + H2O = L-seryl-[protein] + phosphate. It catalyses the reaction O-phospho-L-threonyl-[protein] + H2O = L-threonyl-[protein] + phosphate. Its function is as follows. Displays phosphatase activity for serine/threonine residues. Has apparently no phosphoglycerate mutase activity. May be regulator of mitochondrial dynamics. May be a central mediator for programmed necrosis. This chain is Serine/threonine-protein phosphatase PGAM5, mitochondrial (pgam5), found in Xenopus tropicalis (Western clawed frog).